The following is a 431-amino-acid chain: Enolase (431 aa).

A (2R)-2-phosphoglycerate-binding site is contributed by Gln-167. Catalysis depends on Glu-209, which acts as the Proton donor. Mg(2+) is bound by residues Asp-246, Glu-290, and Asp-317. (2R)-2-phosphoglycerate-binding residues include Lys-342, Arg-371, Ser-372, and Lys-393. Residue Lys-342 is the Proton acceptor of the active site.

This sequence belongs to the enolase family. In terms of assembly, component of the RNA degradosome, a multiprotein complex involved in RNA processing and mRNA degradation. Mg(2+) is required as a cofactor.

It localises to the cytoplasm. The protein localises to the secreted. It is found in the cell surface. The enzyme catalyses (2R)-2-phosphoglycerate = phosphoenolpyruvate + H2O. It functions in the pathway carbohydrate degradation; glycolysis; pyruvate from D-glyceraldehyde 3-phosphate: step 4/5. Catalyzes the reversible conversion of 2-phosphoglycerate (2-PG) into phosphoenolpyruvate (PEP). It is essential for the degradation of carbohydrates via glycolysis. The protein is Enolase of Yersinia pestis bv. Antiqua (strain Antiqua).